The chain runs to 264 residues: Indole-3-glycerol phosphate synthase (264 aa).

Belongs to the TrpC family.

The catalysed reaction is 1-(2-carboxyphenylamino)-1-deoxy-D-ribulose 5-phosphate + H(+) = (1S,2R)-1-C-(indol-3-yl)glycerol 3-phosphate + CO2 + H2O. Its pathway is amino-acid biosynthesis; L-tryptophan biosynthesis; L-tryptophan from chorismate: step 4/5. The polypeptide is Indole-3-glycerol phosphate synthase (Polaromonas sp. (strain JS666 / ATCC BAA-500)).